Consider the following 447-residue polypeptide: Tubulin beta-1 chain (447 aa).

Gln11, Glu69, Ser138, Gly142, Thr143, Gly144, Asn204, and Asn226 together coordinate GTP. Glu69 is a binding site for Mg(2+). The tract at residues 427–447 (EATADEDAEFEEEQEAEVEEN) is disordered. The segment covering 429 to 447 (TADEDAEFEEEQEAEVEEN) has biased composition (acidic residues).

This sequence belongs to the tubulin family. As to quaternary structure, dimer of alpha and beta chains. A typical microtubule is a hollow water-filled tube with an outer diameter of 25 nm and an inner diameter of 15 nM. Alpha-beta heterodimers associate head-to-tail to form protofilaments running lengthwise along the microtubule wall with the beta-tubulin subunit facing the microtubule plus end conferring a structural polarity. Microtubules usually have 13 protofilaments but different protofilament numbers can be found in some organisms and specialized cells. Mg(2+) is required as a cofactor.

Its subcellular location is the cytoplasm. It is found in the cytoskeleton. Tubulin is the major constituent of microtubules, a cylinder consisting of laterally associated linear protofilaments composed of alpha- and beta-tubulin heterodimers. Microtubules grow by the addition of GTP-tubulin dimers to the microtubule end, where a stabilizing cap forms. Below the cap, tubulin dimers are in GDP-bound state, owing to GTPase activity of alpha-tubulin. The polypeptide is Tubulin beta-1 chain (Glossina morsitans morsitans (Savannah tsetse fly)).